A 98-amino-acid polypeptide reads, in one-letter code: NADH-ubiquinone oxidoreductase chain 4L (98 aa).

Transmembrane regions (helical) follow at residues 1–21 (MPII…GMLF), 29–49 (SLLC…LMAL), and 58–78 (IVPI…LALL).

It belongs to the complex I subunit 4L family. As to quaternary structure, core subunit of respiratory chain NADH dehydrogenase (Complex I) which is composed of 45 different subunits.

Its subcellular location is the mitochondrion inner membrane. It carries out the reaction a ubiquinone + NADH + 5 H(+)(in) = a ubiquinol + NAD(+) + 4 H(+)(out). In terms of biological role, core subunit of the mitochondrial membrane respiratory chain NADH dehydrogenase (Complex I) which catalyzes electron transfer from NADH through the respiratory chain, using ubiquinone as an electron acceptor. Part of the enzyme membrane arm which is embedded in the lipid bilayer and involved in proton translocation. The sequence is that of NADH-ubiquinone oxidoreductase chain 4L (MT-ND4L) from Trachypithecus obscurus (Dusky leaf-monkey).